The primary structure comprises 188 residues: Auxin-induced protein 22C (188 aa).

Positions Leu13 to Leu17 match the EAR-like (transcriptional repression) motif. Residues Gly16 to Lys57 form a disordered region. Residues Lys79 to Asp167 form the PB1 domain.

The protein belongs to the Aux/IAA family. In terms of assembly, homodimers and heterodimers.

The protein localises to the nucleus. Its function is as follows. Aux/IAA proteins are short-lived transcriptional factors that function as repressors of early auxin response genes at low auxin concentrations. Repression is thought to result from the interaction with auxin response factors (ARFs), proteins that bind to the auxin-responsive promoter element (AuxRE). Formation of heterodimers with ARF proteins may alter their ability to modulate early auxin response genes expression. This chain is Auxin-induced protein 22C (AUX22C), found in Vigna radiata var. radiata (Mung bean).